The sequence spans 326 residues: MSQVVVCALYKFVTLPHYESLRAPLLAVMEASDIRGTLLLAQEGINGTVAGTQAAIDGLLAWFDTQEGLDNIVSKVSFDAQMPFYRTKVKLKKEIVTMGVEGIDPRKVVGTYVKPKDWNALISDPDVILVDTRNDYEVQIGTFKHAVNPVTETFREFPEYVKQNLDPAKHKKVAMFCTGGIRCEKSTAYLKEQGFDEVYHLEGGILKYLEEVKQEESLWEGECFVFDNRVSVNHNLEKGVYDQCNACRMPITEQDKLLPSFVQGVSCPHCIDKIPQEQRQRFIERERQVQLARQRGEAHIGSDVKQVIATRREKKDSLRKAQNEQS.

Residues 123 to 217 enclose the Rhodanese domain; that stretch reads SDPDVILVDT…YLEEVKQEES (95 aa). Cys177 acts as the Cysteine persulfide intermediate in catalysis.

The protein belongs to the TrhO family.

It carries out the reaction uridine(34) in tRNA + AH2 + O2 = 5-hydroxyuridine(34) in tRNA + A + H2O. In terms of biological role, catalyzes oxygen-dependent 5-hydroxyuridine (ho5U) modification at position 34 in tRNAs. In Shewanella denitrificans (strain OS217 / ATCC BAA-1090 / DSM 15013), this protein is tRNA uridine(34) hydroxylase.